We begin with the raw amino-acid sequence, 488 residues long: Palmitoleoyl-protein carboxylesterase notum1 (488 aa).

Residues 1–20 (MAGALCVTLLLLLSTNTVSG) form the signal peptide. Residue asparagine 90 is glycosylated (N-linked (GlcNAc...) asparagine). Residues serine 226, aspartate 334, and histidine 383 each act as charge relay system in the active site.

This sequence belongs to the pectinacetylesterase family. Notum subfamily. Expressed in the egg and through cleavage to gastrulation stages. Enriched in the animal (prospective ectoderm) and dorsal regions in early gastrula. Shows a dynamic expression during embryogenesis, in particular during neural induction and antero-posterior (AP) patterning.

Its subcellular location is the secreted. It carries out the reaction [Wnt protein]-O-(9Z)-hexadecenoyl-L-serine + H2O = [Wnt protein]-L-serine + (9Z)-hexadecenoate + H(+). Its function is as follows. Carboxylesterase that acts as a key negative regulator of the Wnt signaling pathway by specifically mediating depalmitoleoylation of WNT proteins. Serine palmitoleoylation of WNT proteins is required for efficient binding to frizzled receptors. Functions in the prospective ectoderm and is required for neural induction. In Xenopus laevis (African clawed frog), this protein is Palmitoleoyl-protein carboxylesterase notum1.